The chain runs to 97 residues: Large ribosomal subunit protein eL21 (97 aa).

Belongs to the eukaryotic ribosomal protein eL21 family.

The protein is Large ribosomal subunit protein eL21 (rpl21e) of Archaeoglobus fulgidus (strain ATCC 49558 / DSM 4304 / JCM 9628 / NBRC 100126 / VC-16).